The chain runs to 278 residues: Secreted RxLR effector protein 151 (278 aa).

The signal sequence occupies residues 1–18 (MRNRAVLFGLFFIGYSSC). The RxLR-dEER signature appears at 49–64 (RLLQVDGPKRILAEER).

Belongs to the RxLR effector family.

The protein localises to the secreted. It localises to the host endoplasmic reticulum membrane. Functionally, secreted effector that completely suppresses the host cell death induced by cell death-inducing proteins. The polypeptide is Secreted RxLR effector protein 151 (Plasmopara viticola (Downy mildew of grapevine)).